The following is a 300-amino-acid chain: Epimerase family protein SAV0769 (300 aa).

The protein belongs to the NAD(P)-dependent epimerase/dehydratase family. SDR39U1 subfamily.

This is Epimerase family protein SAV0769 from Staphylococcus aureus (strain Mu50 / ATCC 700699).